The sequence spans 318 residues: tRNA-modifying protein YgfZ (318 aa).

Residues W28 and W182 each contribute to the folate site.

Belongs to the tRNA-modifying YgfZ family.

The protein localises to the cytoplasm. Folate-binding protein involved in regulating the level of ATP-DnaA and in the modification of some tRNAs. It is probably a key factor in regulatory networks that act via tRNA modification, such as initiation of chromosomal replication. In Aliivibrio fischeri (strain ATCC 700601 / ES114) (Vibrio fischeri), this protein is tRNA-modifying protein YgfZ.